A 396-amino-acid polypeptide reads, in one-letter code: Bifunctional enzyme Fae/Hps (396 aa).

Residues 1–161 form a formaldehyde-activating enzyme region; that stretch reads MMLIGEALIG…HEKDRAAHAV (161 aa). Catalysis depends on histidine 17, which acts as the Proton donor. Aspartate 19, leucine 48, lysine 66, threonine 68, and glutamine 83 together coordinate substrate. A 3-hexulose-6-phosphate synthase region spans residues 162-396; that stretch reads MGFKISKLWD…IDQFRIMTDF (235 aa).

It in the N-terminal section; belongs to the formaldehyde-activating enzyme family. This sequence in the C-terminal section; belongs to the HPS/KGPDC family. HPS subfamily.

It carries out the reaction 5,6,7,8-tetrahydromethanopterin + formaldehyde = 5,10-methylenetetrahydromethanopterin + H2O. The catalysed reaction is D-ribulose 5-phosphate + formaldehyde = D-arabino-hex-3-ulose 6-phosphate. Its pathway is carbohydrate biosynthesis; D-ribose 5-phosphate biosynthesis. Its function is as follows. Catalyzes the condensation of formaldehyde with tetrahydromethanopterin (H(4)MPT) to 5,10-methylenetetrahydromethanopterin. Functionally, catalyzes the reversible formation of ribulose-5-phosphate and formaldehyde from 3-hexulose-6-phosphate. This Methanococcoides burtonii (strain DSM 6242 / NBRC 107633 / OCM 468 / ACE-M) protein is Bifunctional enzyme Fae/Hps.